The following is a 289-amino-acid chain: MFARRCGRLANRFVRLKSTSATSPITYKALHANSPLPRCRIIEPPRATVPEAVSNIIMSTPFNRVQRPKRHVFNCLVQNEPGVLSRLSGILAARGFNIDSLVVCATEVENLSRMTIVLRGADEVVEQAKRQIEDIVSVWAVLDYTGTSMVERELLLAKVSLLGPDHFQEHFERSEKVAESTNAKAKSDGEGVMNANAALQLRASQLAAINQLTTLFHGRVADISTETIILELTATPDRVDNFLSLLRPYGVLEACRTGTSAMTRAPHSNEVTEEAEDDVEVEEVFLPPG.

Phosphoserine is present on Ser-34. In terms of domain architecture, ACT spans 72-149 (VFNCLVQNEP…AVLDYTGTSM (78 aa)).

Belongs to the acetolactate synthase small subunit family.

It localises to the cytoplasm. It functions in the pathway amino-acid biosynthesis; L-isoleucine biosynthesis; L-isoleucine from 2-oxobutanoate: step 1/4. The protein operates within amino-acid biosynthesis; L-valine biosynthesis; L-valine from pyruvate: step 1/4. Its function is as follows. Stimulates activity of the acetolactate synthase catalytic subunit ilv1. This chain is Probable acetolactate synthase small subunit, found in Schizosaccharomyces pombe (strain 972 / ATCC 24843) (Fission yeast).